Reading from the N-terminus, the 220-residue chain is Uracil-DNA glycosylase (220 aa).

Residue Asp65 is the Proton acceptor of the active site.

It belongs to the uracil-DNA glycosylase (UDG) superfamily. UNG family.

The protein localises to the cytoplasm. It carries out the reaction Hydrolyzes single-stranded DNA or mismatched double-stranded DNA and polynucleotides, releasing free uracil.. Its function is as follows. Excises uracil residues from the DNA which can arise as a result of misincorporation of dUMP residues by DNA polymerase or due to deamination of cytosine. In Leuconostoc mesenteroides subsp. mesenteroides (strain ATCC 8293 / DSM 20343 / BCRC 11652 / CCM 1803 / JCM 6124 / NCDO 523 / NBRC 100496 / NCIMB 8023 / NCTC 12954 / NRRL B-1118 / 37Y), this protein is Uracil-DNA glycosylase.